A 147-amino-acid polypeptide reads, in one-letter code: Acidic phospholipase A2 S9-53F (147 aa).

Positions 1–19 (MYPAHLLVLLAVCVSLLGA) are cleaved as a signal peptide. The propeptide occupies 20–27 (SDIPPQPL). Intrachain disulfides connect C38–C99, C54–C146, C56–C72, C71–C127, C78–C120, C88–C113, and C106–C118. Residues Y55, G57, and G59 each coordinate Ca(2+). H75 is a catalytic residue. D76 provides a ligand contact to Ca(2+). D121 is a catalytic residue.

This sequence belongs to the phospholipase A2 family. Group I subfamily. D49 sub-subfamily. Requires Ca(2+) as cofactor. In terms of tissue distribution, expressed by the venom gland.

It is found in the secreted. The enzyme catalyses a 1,2-diacyl-sn-glycero-3-phosphocholine + H2O = a 1-acyl-sn-glycero-3-phosphocholine + a fatty acid + H(+). Its function is as follows. Snake venom phospholipase A2 (PLA2) that inhibits collagen-induced platelet aggregation. PLA2 catalyzes the calcium-dependent hydrolysis of the 2-acyl groups in 3-sn-phosphoglycerides. In Austrelaps superbus (Lowland copperhead snake), this protein is Acidic phospholipase A2 S9-53F.